The chain runs to 273 residues: Endochitinase EP3 (273 aa).

A signal peptide spans 1-28; the sequence is MLTPTISKSISLVTILLVLQAFSNTTKA. A glycan (N-linked (GlcNAc...) asparagine) is linked at N24. Residues 29–63 form the Chitin-binding type-1 domain; the sequence is QNCGCSSELCCSQFGFCGNTSDYCGVGCQQGPCFA. 4 disulfide bridges follow: C31/C39, C33/C45, C38/C52, and C56/C61. N-linked (GlcNAc...) asparagine glycosylation occurs at N47. The catalytic stretch occupies residues 70-273; that stretch reads VSVAEIVTQE…GVDPGNNLTC (204 aa). The active-site Proton donor is E136. Residues N157 and N270 are each glycosylated (N-linked (GlcNAc...) asparagine).

It belongs to the glycosyl hydrolase 19 family. Chitinase class I subfamily. As to expression, expressed in cells surrounding embryos, stems, seedlings, pollen, roots, shoots, inflorescence, flowers, siliques and leaves. Present in seedpods and seed embryos, but not in roots, inflorescence stems, leaves and flowers.

It catalyses the reaction Random endo-hydrolysis of N-acetyl-beta-D-glucosaminide (1-&gt;4)-beta-linkages in chitin and chitodextrins.. Probably involved in hypersensitive reaction upon Xanthomonas campestris infection. This Arabidopsis thaliana (Mouse-ear cress) protein is Endochitinase EP3.